We begin with the raw amino-acid sequence, 212 residues long: Peroxiredoxin 2 (212 aa).

Positions 7–162 (PLIGEKFPEM…ILRSIRALQL (156 aa)) constitute a Thioredoxin domain. Cys-49 (cysteine sulfenic acid (-SOH) intermediate) is an active-site residue. Position 125 (Arg-125) interacts with substrate.

Belongs to the peroxiredoxin family. Prx6 subfamily. As to quaternary structure, homodecamer. Pentamer of dimers that assemble into a ring structure.

Its subcellular location is the cytoplasm. It carries out the reaction a hydroperoxide + [thioredoxin]-dithiol = an alcohol + [thioredoxin]-disulfide + H2O. Functionally, thiol-specific peroxidase that catalyzes the reduction of hydrogen peroxide and organic hydroperoxides to water and alcohols, respectively. Plays a role in cell protection against oxidative stress by detoxifying peroxides. The polypeptide is Peroxiredoxin 2 (Sulfurisphaera tokodaii (strain DSM 16993 / JCM 10545 / NBRC 100140 / 7) (Sulfolobus tokodaii)).